The following is a 506-amino-acid chain: Bone morphogenetic protein 6 (506 aa).

An N-terminal signal peptide occupies residues M1 to S20. The propeptide occupies C21–R367. Disordered regions lie at residues A44 to L64, P87 to S125, and K139 to S195. A compositionally biased stretch (low complexity) spans L96 to Q112. Over residues D140 to E153 the composition is skewed to acidic residues. N-linked (GlcNAc...) asparagine glycosylation is found at N234, N262, N379, N397, and N447. Positions T366–N397 are disordered. Residues D386–N397 show a composition bias toward polar residues. Intrachain disulfides connect C405-C471, C434-C503, and C438-C505.

This sequence belongs to the TGF-beta family. In terms of assembly, interacts with SOSTDC1. Interacts (when glycosylated) with type I receptor ACVR1; the interaction may induce HAMP expression. Interacts with type II receptor ACVR2B. Interacts with Hemojuvelin/HJV. Interacts with ERFE; the interaction inhibits BMP-induced transcription of HAMP. Interacts with BMPR1A/ALK3. Forms heterodimers with BMP2 in vitro; the heterodimer then binds to its receptor BMPR1A /ALK3 and may induce HAMP expression.

The protein localises to the secreted. Functionally, growth factor of the TGF-beta superfamily that plays essential roles in many developmental processes including cartilage and bone formation. Also plays an important role in the regulation of HAMP/hepcidin expression and iron metabolism by acting as a ligand for hemojuvelin/HJV. Also acts to promote expression of HAMP, potentially via the interaction with its receptor BMPR1A/ALK3. Initiates the canonical BMP signaling cascade by associating with type I receptor ACVR1 and type II receptor ACVR2B. In turn, ACVR1 propagates signal by phosphorylating SMAD1/5/8 that travel to the nucleus and act as activators and repressors of transcription of target. Can also signal through non-canonical pathway such as TAZ-Hippo signaling cascade to modulate VEGF signaling by regulating VEGFR2 expression. The polypeptide is Bone morphogenetic protein 6 (Bmp6) (Rattus norvegicus (Rat)).